Consider the following 113-residue polypeptide: Protein INCREASED RESISTANCE TO MYZUS PERSICAE 1 (113 aa).

The FLZ-type zinc-finger motif lies at 56 to 100 (DFLKTCSLCNRSLCHHRDIYMYRGNNAFCSLECREKQIKLDEKKA).

It belongs to the FLZ family. In terms of assembly, interacts with KIN10 and KIN11 via its FLZ-type zinc finger domain. Interacts with KINB3 via its N-terminal part. Interacts with GEBP.

The protein resides in the nucleus. Its subcellular location is the cytoplasm. Functionally, may act as an adapter to facilitate the interaction of SnRK1 complex with effector proteins, conferring tissue- and stimulus-type specific differences in the SnRK1 regulation pathway. The polypeptide is Protein INCREASED RESISTANCE TO MYZUS PERSICAE 1 (Arabidopsis thaliana (Mouse-ear cress)).